The primary structure comprises 523 residues: REST corepressor 2 (523 aa).

Residues 1 to 43 (MPSVMEKPSAGSGILSRSRAKTAPNGGQPHSEDDSSEEEHSHD) are disordered. Over residues 30–43 (HSEDDSSEEEHSHD) the composition is skewed to basic and acidic residues. Residues Ser31, Ser35, Ser36, and Ser63 each carry the phosphoserine modification. In terms of domain architecture, ELM2 spans 44-129 (SMIRVGTNYQ…KSLADLANFT (86 aa)). Lys88 participates in a covalent cross-link: Glycyl lysine isopeptide (Lys-Gly) (interchain with G-Cter in SUMO2). Residues 130–181 (PFPDEWTVEDKVLFEQAFGFHGKCFQRIQQMLPDKVIPSLVKYYYSWKKTRS) enclose the SANT 1 domain. The interval 185–244 (VMDRQARRLGGRKDKEDSDELEEGRGAVSEGEPDTGDPKREPLPSRPLNARPGPGKKEVQ) is disordered. Ser202 carries the post-translational modification Phosphoserine. Positions 283 to 314 (TLRGLDSQLISLKRQVQSMKQTNSSLRQALEG) form a coiled coil. The 52-residue stretch at 327–378 (KFNSRWTTDEQLLAVQAIRRYGKDFGAIAEVIGNKTLTQVKTFFVSYRRRFN) folds into the SANT 2 domain. The disordered stretch occupies residues 387 to 523 (EAEQDGAPAA…APLEPPAPSL (137 aa)). Over residues 432 to 459 (SVPPAPPPPPPPTSLSQPPPLLRPPLPT) the composition is skewed to pro residues. Over residues 460-482 (APTLLRQPPPLQQGRFLQPRLAP) the composition is skewed to low complexity. At Arg479 the chain carries Asymmetric dimethylarginine. Residues 504–523 (GPQPPPTLVGAPLEPPAPSL) show a composition bias toward pro residues.

It belongs to the CoREST family. As to expression, predominantly, but not exclusively, expressed in neural tissue. Strongly expressed in neural domains of the developing brain of the developing mouse CNS.

The protein localises to the nucleus. Its function is as follows. May act as a component of a corepressor complex that represses transcription. This Mus musculus (Mouse) protein is REST corepressor 2 (Rcor2).